The sequence spans 309 residues: Ribosomal protein L11 methyltransferase (309 aa).

Residues Thr152, Gly178, Asp200, and Asn242 each contribute to the S-adenosyl-L-methionine site.

This sequence belongs to the methyltransferase superfamily. PrmA family.

It is found in the cytoplasm. It catalyses the reaction L-lysyl-[protein] + 3 S-adenosyl-L-methionine = N(6),N(6),N(6)-trimethyl-L-lysyl-[protein] + 3 S-adenosyl-L-homocysteine + 3 H(+). In terms of biological role, methylates ribosomal protein L11. The chain is Ribosomal protein L11 methyltransferase from Pelobacter propionicus (strain DSM 2379 / NBRC 103807 / OttBd1).